The sequence spans 422 residues: Phytoene synthase, chloroplastic (422 aa).

Residues 1–83 constitute a chloroplast transit peptide; that stretch reads MSLASSLVVS…GSVIVASMVA (83 aa).

The protein belongs to the phytoene/squalene synthase family. Monomer.

The protein resides in the plastid. Its subcellular location is the chloroplast. The catalysed reaction is 2 (2E,6E,10E)-geranylgeranyl diphosphate = 15-cis-phytoene + 2 diphosphate. The protein operates within carotenoid biosynthesis; phytoene biosynthesis; all-trans-phytoene from geranylgeranyl diphosphate: step 1/1. In terms of biological role, catalyzes the reaction from prephytoene diphosphate to phytoene. The sequence is that of Phytoene synthase, chloroplastic (PSY) from Cucumis melo (Muskmelon).